Consider the following 226-residue polypeptide: 7-cyano-7-deazaguanine synthase (226 aa).

10-20 provides a ligand contact to ATP; sequence FSGGQDSTTLA. Residues Cys-190, Cys-205, Cys-208, and Cys-211 each coordinate Zn(2+).

The protein belongs to the QueC family. It depends on Zn(2+) as a cofactor.

It carries out the reaction 7-carboxy-7-deazaguanine + NH4(+) + ATP = 7-cyano-7-deazaguanine + ADP + phosphate + H2O + H(+). Its pathway is purine metabolism; 7-cyano-7-deazaguanine biosynthesis. In terms of biological role, catalyzes the ATP-dependent conversion of 7-carboxy-7-deazaguanine (CDG) to 7-cyano-7-deazaguanine (preQ(0)). This chain is 7-cyano-7-deazaguanine synthase, found in Helicobacter pylori (strain ATCC 700392 / 26695) (Campylobacter pylori).